Here is a 215-residue protein sequence, read N- to C-terminus: Deoxyadenosine kinase (215 aa).

Position 9–17 (9–17 (GPIGAGKSS)) interacts with ATP. Substrate-binding residues include Glu33, Tyr45, and Asn56. Residue Asp79 is the Proton acceptor of the active site. 3 residues coordinate substrate: Arg80, Asp85, and Glu150.

Belongs to the DCK/DGK family. Heterodimer of a deoxyadenosine (DAK) and a deoxyguanosine kinase (DGK).

It carries out the reaction 2'-deoxyadenosine + ATP = dAMP + ADP + H(+). Its function is as follows. DGK/DAK plays an essential role in generating the deoxyribonucleotide precursors, dGTP and dATP, for DNA metabolism. The sequence is that of Deoxyadenosine kinase from Lactobacillus acidophilus (strain ATCC 700396 / NCK56 / N2 / NCFM).